A 382-amino-acid polypeptide reads, in one-letter code: Leucine carboxyl methyltransferase 1 (382 aa).

A compositionally biased stretch (polar residues) spans 1–11 (MSAPQIPNLNT). The disordered stretch occupies residues 1–45 (MSAPQIPNLNTLRRGGGRGRFRARGGPDSSSSSGNKDRVVQGTDN). Residues Arg-88, Gly-121, Asp-146, 193 to 194 (DL), and Glu-230 each bind S-adenosyl-L-methionine.

It belongs to the methyltransferase superfamily. LCMT family.

The enzyme catalyses [phosphatase 2A protein]-C-terminal L-leucine + S-adenosyl-L-methionine = [phosphatase 2A protein]-C-terminal L-leucine methyl ester + S-adenosyl-L-homocysteine. In terms of biological role, methylates the carboxyl group of the C-terminal leucine residue of protein phosphatase 2A catalytic subunits to form alpha-leucine ester residues. This chain is Leucine carboxyl methyltransferase 1 (ppm1), found in Emericella nidulans (strain FGSC A4 / ATCC 38163 / CBS 112.46 / NRRL 194 / M139) (Aspergillus nidulans).